Reading from the N-terminus, the 518-residue chain is WEB family protein At2g40480 (518 aa).

Coiled coils occupy residues 95 to 141 and 188 to 219; these read DIKR…LQQE and DNLV…AKLT. The disordered stretch occupies residues 303–337; the sequence is NGESQDDDSEFCFPEPPRSPVTPRGLRIDNDFSTD. Positions 328–337 are enriched in basic and acidic residues; it reads LRIDNDFSTD. Residues 344-375 adopt a coiled-coil conformation; that stretch reads ILKKLEEATEGVKQSKQALEAALNRVEIANVK.

This sequence belongs to the WEB family.

The chain is WEB family protein At2g40480 from Arabidopsis thaliana (Mouse-ear cress).